A 353-amino-acid polypeptide reads, in one-letter code: MNKLSLFVYLFFFLSFLFLFLYLLQPFFNPIVWAIVFGIVLYPLYGFIKRKLKSENLAAFLVIFIVLVAIVIPFTIFAVITAQQIIVFSIKVVNFVQTHSVNDLINSLKEIPFLKEKRESLEPLLNYLQSEEFRRALINALNSILTFVGDRLRSYVYTAGTSLFHVFVFLLTLFFILRDGEKVLKEIINSIPMKREDLEEILKTIYRTVLAVIYGTVGTAVAQSIMGFIGYSLAGVEFALIWALITFFAAFVPPFGAAFVWVPMDIYLFTTKGIKEGLILLFFGTFLISTMDNIVRPLVMKQGIKLPYVALFFSTIGGLIKFGFIGVFLGPIILSTMLASVKIYRRRVIHSGI.

8 consecutive transmembrane segments (helical) span residues Leu4–Leu24, Phe28–Ile48, Phe60–Ile80, Val156–Ile176, Val209–Ile229, Leu240–Val260, Leu268–Ile288, and Val309–Leu329.

This sequence belongs to the autoinducer-2 exporter (AI-2E) (TC 2.A.86) family.

It localises to the cell membrane. This Aquifex aeolicus (strain VF5) protein is Putative transport protein aq_740.